The primary structure comprises 341 residues: 33 kDa chaperonin (341 aa).

Cystine bridges form between Cys-245–Cys-247 and Cys-278–Cys-281.

It belongs to the HSP33 family. Under oxidizing conditions two disulfide bonds are formed involving the reactive cysteines. Under reducing conditions zinc is bound to the reactive cysteines and the protein is inactive.

The protein localises to the cytoplasm. Its function is as follows. Redox regulated molecular chaperone. Protects both thermally unfolding and oxidatively damaged proteins from irreversible aggregation. Plays an important role in the bacterial defense system toward oxidative stress. The sequence is that of 33 kDa chaperonin from Thermus thermophilus (strain ATCC BAA-163 / DSM 7039 / HB27).